Consider the following 195-residue polypeptide: Probable serine/threonine-protein kinase BUD32 homolog (195 aa).

Positions 1–195 constitute a Protein kinase domain; sequence MKVYLGGEAE…GRYVERVSMG (195 aa). An ATP-binding site is contributed by Lys12. Residue Asp107 is the Proton acceptor of the active site.

This sequence belongs to the protein kinase superfamily. Tyr protein kinase family. BUD32 subfamily.

The protein resides in the cytoplasm. It catalyses the reaction L-seryl-[protein] + ATP = O-phospho-L-seryl-[protein] + ADP + H(+). The catalysed reaction is L-threonyl-[protein] + ATP = O-phospho-L-threonyl-[protein] + ADP + H(+). Functionally, could be involved in the formation of a threonylcarbamoyl group on adenosine at position 37 (t(6)A37) in tRNAs that read codons beginning with adenine. This chain is Probable serine/threonine-protein kinase BUD32 homolog, found in Archaeoglobus fulgidus (strain ATCC 49558 / DSM 4304 / JCM 9628 / NBRC 100126 / VC-16).